The primary structure comprises 146 residues: Large ribosomal subunit protein uL15 (146 aa).

Positions 1–13 (MKLNELHPSEGSR) are enriched in basic and acidic residues. The disordered stretch occupies residues 1 to 56 (MKLNELHPSEGSRHARKRVGRGTSSGFGKTSGRGQKGQHARSGGNTRLGFEGGQMP). Residues 23–35 (TSSGFGKTSGRGQ) show a composition bias toward gly residues.

Belongs to the universal ribosomal protein uL15 family. In terms of assembly, part of the 50S ribosomal subunit.

Functionally, binds to the 23S rRNA. The polypeptide is Large ribosomal subunit protein uL15 (Lactobacillus delbrueckii subsp. bulgaricus (strain ATCC 11842 / DSM 20081 / BCRC 10696 / JCM 1002 / NBRC 13953 / NCIMB 11778 / NCTC 12712 / WDCM 00102 / Lb 14)).